A 382-amino-acid chain; its full sequence is 1-deoxy-D-xylulose 5-phosphate reductoisomerase (382 aa).

NADPH-binding residues include threonine 10, glycine 11, serine 12, isoleucine 13, glycine 36, and asparagine 122. Lysine 123 provides a ligand contact to 1-deoxy-D-xylulose 5-phosphate. Position 124 (glutamate 124) interacts with NADPH. Mn(2+) is bound at residue aspartate 148. 1-deoxy-D-xylulose 5-phosphate is bound by residues serine 149, glutamate 150, serine 174, and histidine 197. Glutamate 150 contacts Mn(2+). Glycine 203 contributes to the NADPH binding site. 4 residues coordinate 1-deoxy-D-xylulose 5-phosphate: serine 210, asparagine 215, lysine 216, and glutamate 219. Glutamate 219 contributes to the Mn(2+) binding site.

This sequence belongs to the DXR family. Requires Mg(2+) as cofactor. It depends on Mn(2+) as a cofactor.

It catalyses the reaction 2-C-methyl-D-erythritol 4-phosphate + NADP(+) = 1-deoxy-D-xylulose 5-phosphate + NADPH + H(+). Its pathway is isoprenoid biosynthesis; isopentenyl diphosphate biosynthesis via DXP pathway; isopentenyl diphosphate from 1-deoxy-D-xylulose 5-phosphate: step 1/6. Functionally, catalyzes the NADPH-dependent rearrangement and reduction of 1-deoxy-D-xylulose-5-phosphate (DXP) to 2-C-methyl-D-erythritol 4-phosphate (MEP). This Chlorobium chlorochromatii (strain CaD3) protein is 1-deoxy-D-xylulose 5-phosphate reductoisomerase.